The chain runs to 244 residues: MAPTKKVPQVPETVLKRRKQRADARTKAAQHKVTVAAKNKEKKTQYFKRAEKYVQEYRNAQKEGLRLKREAEAKGDFYVPAEHKVAFVVRIRGINQLHPKPRKALQILRLRQINNGVFVKLNKATLPLLRIIEPYVAWGYPNNKTIHDLLYKRGYAKVDGNRVPITDNTIVEQSLGKFNIICLEDLAHEIATVGPHFKEATNFLWPFKLNNPTGGWTKKTNHFVEGGDFGNREDQINNLLRKMV.

Residues 1 to 37 (MAPTKKVPQVPETVLKRRKQRADARTKAAQHKVTVAA) are disordered.

Belongs to the universal ribosomal protein uL30 family.

Functionally, binds to G-rich structures in 28S rRNA and in mRNAs. Plays a regulatory role in the translation apparatus; inhibits cell-free translation of mRNAs. This is Large ribosomal subunit protein uL30 (rpl-7) from Caenorhabditis elegans.